We begin with the raw amino-acid sequence, 245 residues long: Terpene cyclase esdpB (245 aa).

The next 7 helical transmembrane spans lie at 19-39 (MVAS…VTTI), 48-68 (SGVT…FAVI), 75-95 (IAAL…YVSV), 112-132 (LPVV…ALSM), 140-160 (LYWG…GLLI), 177-197 (FIAS…WPSA), and 208-228 (WLSG…YHIS).

The protein belongs to the paxB family.

The protein resides in the membrane. Its pathway is secondary metabolite biosynthesis; terpenoid biosynthesis. Functionally, terpene cyclase; part of the cluster that mediates the biosynthesis of shearones, diterpenoid pyrones (DPs) which are structurally diverse meroterpenoids consisting of a diterpene linked by a pyrone, and which may exhibit a range of bioactivities. Within the pathway, esdpB takes part to the biosynthesis of the molecular scaffold by catalyzing the cyclization of the prenyl group initiated by protonation and ring-opening of the epoxide to produce the diterpenoid pyrone scaffold. The molecular scaffold is commonly biosynthesized by a series of enzymes including the non-reducing polyketide synthase (NR-PKS) esdpA that generates an alpha-pyrone; the prenyltransferase esdpC that attaches a geranylgeranyl pyrophosphate (GGPP) produced by the GGPP synthase (GGPPS) esdpD onto the pyrone unit; the FAD-dependent monooxygenase esdpE that converts an olefin on the diterpene unit into an epoxide; and the terpene cyclase esdpB that catalyzes the cyclization reactions to give the molecular backbone shearone A. In the modification steps, esdpF oxidizes the hydroxy group to a ketone at C-3 and esdpG then attaches hydroxy groups at both C-11 and C-12. After that, esdpI hydroxylates at C-20 and esdpH hydroxylates at C-6'. The ether bridge is generated by nucleophilic attack of the hydroxy group at C-20 to the carbonyl carbon at C-3. EsdpH can also functions prior to esdpI. The different combinations of these modification enzymes lead to the production of diverse shearone derivatives, shearone I being the end product of the pathway. The alpha-ketoglutarate-dependent dioxygenase esdpJ seems not to be involved in this pathway. This Penicillium shearii (Eupenicillium shearii) protein is Terpene cyclase esdpB.